We begin with the raw amino-acid sequence, 215 residues long: Sodium channel regulatory subunit beta-3 (215 aa).

The first 22 residues, 1–22, serve as a signal peptide directing secretion; the sequence is MPAFNRLFPLASLVLIYWVSVC. Residues 23–156 lie on the Extracellular side of the membrane; it reads FPVCVEVPSE…EEAGEDFTSV (134 aa). 2 cysteine pairs are disulfide-bonded: cysteine 26–cysteine 48 and cysteine 45–cysteine 120. The Ig-like C2-type domain maps to 32–154; that stretch reads ETEAVQGNPM…VTEEAGEDFT (123 aa). N-linked (GlcNAc...) asparagine glycosylation is found at asparagine 95, asparagine 109, asparagine 113, and asparagine 121. The helical transmembrane segment at 157 to 178 threads the bilayer; the sequence is VSEIMMYILLVFLTLWLLIEMI. At 179 to 215 the chain is on the cytoplasmic side; it reads YCYRKVSKAEEAAQENASDYLAIPSENKENSAVPVEE.

This sequence belongs to the sodium channel auxiliary subunit SCN3B (TC 8.A.17) family. As to quaternary structure, a voltage-gated sodium (Nav) channel consists of an ion-conducting pore-forming alpha subunit functional on its own that is regulated by one or more beta subunits. Forms homodimers and homotrimers. SCN3B is non-covalently associated with alpha subunits and induces the formation of alpha subunit oligomers, including trimers. Interacts with SCN5A/Nav1.5; regulatory subunit of SCN5A/Nav1.5. Interacts with SCN7A/Nav2.1; probable regulatory subunit of SCN7A/Nav2.1. Interacts with SCN10A; regulatory subunit of SCN10A/Nav1.8. Interacts with NFASC; probably involved in targeting the sodium channels to the nodes of Ranvier. Intramolecular disulfide bonds favor the voltage-gated sodium channel oligomeric complex assembly. In terms of processing, N-glycosylated. Expressed in the atrium.

The protein localises to the cell membrane. In terms of biological role, regulatory subunit of multiple voltage-gated sodium (Nav) channels directly mediating the depolarization of excitable membranes. Navs, also called VGSCs (voltage-gated sodium channels) or VDSCs (voltage-dependent sodium channels), operate by switching between closed and open conformations depending on the voltage difference across the membrane. In the open conformation they allow Na(+) ions to selectively pass through the pore, along their electrochemical gradient. The influx of Na+ ions provokes membrane depolarization, initiating the propagation of electrical signals throughout cells and tissues. The accessory beta subunits participate in localization and functional modulation of the Nav channels. Modulates the activity of SCN2A/Nav1.2, causing a hyperpolarizing shift in the voltage-dependence of inactivation of the channel and increasing the fraction of channels operating in the fast gating mode. Modulates the activity of SCN5A/Nav1.5. Could also regulate the atypical sodium channel SCN7A/Nav2.1. Modulates the activity of SCN10A/Nav1.8, regulating its oligomerization and accelerating the recovery from inactivation. In Homo sapiens (Human), this protein is Sodium channel regulatory subunit beta-3.